The following is a 206-amino-acid chain: Small ribosomal subunit protein uS4 (206 aa).

In terms of domain architecture, S4 RNA-binding spans cysteine 93–leucine 156.

This sequence belongs to the universal ribosomal protein uS4 family. In terms of assembly, part of the 30S ribosomal subunit. Contacts protein S5. The interaction surface between S4 and S5 is involved in control of translational fidelity.

Functionally, one of the primary rRNA binding proteins, it binds directly to 16S rRNA where it nucleates assembly of the body of the 30S subunit. Its function is as follows. With S5 and S12 plays an important role in translational accuracy. The polypeptide is Small ribosomal subunit protein uS4 (Protochlamydia amoebophila (strain UWE25)).